The primary structure comprises 167 residues: MPLLDSFKVDHTKMNAPAVRIAKTMLTPKGDNITVFDLRFCIPNKEILSPKGIHTLEHLFAGFMRDHLNGDSIEIIDISPMGCRTGFYMSLIGTPNEQEVSEAWLASMQDVLGVQDQAAIPELNIYQCGSYTEHSLEDAHEIAKNVIARGIGVNKNEDLSLDNSLLK.

Histidine 54, histidine 58, and cysteine 128 together coordinate Fe cation.

This sequence belongs to the LuxS family. As to quaternary structure, homodimer. Fe cation serves as cofactor.

It carries out the reaction S-(5-deoxy-D-ribos-5-yl)-L-homocysteine = (S)-4,5-dihydroxypentane-2,3-dione + L-homocysteine. Functionally, involved in the synthesis of autoinducer 2 (AI-2) which is secreted by bacteria and is used to communicate both the cell density and the metabolic potential of the environment. The regulation of gene expression in response to changes in cell density is called quorum sensing. Catalyzes the transformation of S-ribosylhomocysteine (RHC) to homocysteine (HC) and 4,5-dihydroxy-2,3-pentadione (DPD). The polypeptide is S-ribosylhomocysteine lyase (Haemophilus influenzae (strain PittGG)).